The sequence spans 89 residues: Small ribosomal subunit protein uS15 (89 aa).

It belongs to the universal ribosomal protein uS15 family. As to quaternary structure, part of the 30S ribosomal subunit. Forms a bridge to the 50S subunit in the 70S ribosome, contacting the 23S rRNA.

In terms of biological role, one of the primary rRNA binding proteins, it binds directly to 16S rRNA where it helps nucleate assembly of the platform of the 30S subunit by binding and bridging several RNA helices of the 16S rRNA. Forms an intersubunit bridge (bridge B4) with the 23S rRNA of the 50S subunit in the ribosome. The sequence is that of Small ribosomal subunit protein uS15 from Syntrophobacter fumaroxidans (strain DSM 10017 / MPOB).